We begin with the raw amino-acid sequence, 330 residues long: Deoxyhypusine hydroxylase (330 aa).

HEAT-like PBS-type repeat units lie at residues 57 to 83 (LKHE…VLRN), 90 to 116 (VRHE…YLSD), and 199 to 225 (ERYR…GFSG). The Fe cation site is built by histidine 59, glutamate 60, histidine 92, and glutamate 93. Histidine 232, glutamate 233, histidine 265, and glutamate 266 together coordinate Fe cation. One copy of the HEAT-like PBS-type 4 repeat lies at 263-289 (VRHEAAEALGGIATPEVLPPLKEWVAR).

This sequence belongs to the deoxyhypusine hydroxylase family. The cofactor is Fe(2+).

Its subcellular location is the cytoplasm. It localises to the nucleus. The enzyme catalyses [eIF5A protein]-deoxyhypusine + AH2 + O2 = [eIF5A protein]-hypusine + A + H2O. It participates in protein modification; eIF5A hypusination. In terms of biological role, catalyzes the hydroxylation of the N(6)-(4-aminobutyl)-L-lysine intermediate to form hypusine, an essential post-translational modification only found in mature eIF-5A factor. This chain is Deoxyhypusine hydroxylase, found in Lentinula edodes (Shiitake mushroom).